The chain runs to 391 residues: Cyclin-B1-2 (391 aa).

This sequence belongs to the cyclin family. Cyclin AB subfamily.

The sequence is that of Cyclin-B1-2 (CYCB1-2) from Oryza sativa subsp. japonica (Rice).